The chain runs to 79 residues: Peptide Im-5 (79 aa).

Positions 1–23 are cleaved as a signal peptide; it reads MKYRKQLLVLFFAYFLVVNESEA. A propeptide spanning residues 49 to 79 is cleaved from the precursor; sequence RALMKRDLQDRMDPYQRNLKLDRYLKQLALD.

Belongs to the non-disulfide-bridged peptide (NDBP) superfamily. Medium-length antimicrobial peptide (group 3) family. Expressed by the venom gland.

Its subcellular location is the secreted. It is found in the target cell membrane. In terms of biological role, antimicrobial peptide that may act by disrupting the integrity of the bacterial cell membrane. Has antibacterial activity against Gram-negative bacterium E.coli NBRC 3972 (MIC=10 uM) and against Gram-positive bacteria S.aureus NBRC 13276 (MIC=2.5-5 uM) and B.subtilis NBRC 3009 (MIC=0.5-1 uM). Also shows potent activity against antibiotic-sensitive and -resistant Acinetobacter baumannii (MIC=1.8-3.6 uM). Shows cytolytic activity against human and sheep erythrocytes. Toxic to cricket A.domestica. The sequence is that of Peptide Im-5 from Isometrus maculatus (Lesser brown scorpion).